The chain runs to 478 residues: Argininosuccinate lyase (478 aa).

The protein belongs to the lyase 1 family. Argininosuccinate lyase subfamily.

The protein localises to the cytoplasm. It carries out the reaction 2-(N(omega)-L-arginino)succinate = fumarate + L-arginine. It functions in the pathway amino-acid biosynthesis; L-arginine biosynthesis; L-arginine from L-ornithine and carbamoyl phosphate: step 3/3. In Leptospira biflexa serovar Patoc (strain Patoc 1 / Ames), this protein is Argininosuccinate lyase.